Reading from the N-terminus, the 217-residue chain is MGQKVHPIGLRVGIIRDWESKWYAEKDYATLLHEDIKVRKYIETALKDASVSKVEIERAANRVNITIHTAKPGKVIGKGGTEVENLRKYLSELTGKRVHINIIEIKRADLDARLVAENIARQLENRVSFRRAQKQAIQRTIRAGAKGIKTQVSGRLGGADIARAEHYSEGTVPLHTLRADIDYAHAEADTTYGKLGVKVWIYRGEVLPTKKSVEGGK.

In terms of domain architecture, KH type-2 spans 38-106 (VRKYIETALK…RVHINIIEIK (69 aa)).

The protein belongs to the universal ribosomal protein uS3 family. As to quaternary structure, part of the 30S ribosomal subunit. Forms a tight complex with proteins S10 and S14.

Its function is as follows. Binds the lower part of the 30S subunit head. Binds mRNA in the 70S ribosome, positioning it for translation. This Lysinibacillus sphaericus (strain C3-41) protein is Small ribosomal subunit protein uS3.